Consider the following 209-residue polypeptide: J domain-containing protein spf31 (209 aa).

Residues 31 to 96 (NAYDVLDILP…KIRESLDSAY (66 aa)) form the J domain. 2 disordered regions span residues 149–175 (ANQQREQARQDEIARERKRRVESEKVW) and 187–209 (QDFLHKTKKNNLKKKNKKPRVLG). Over residues 154 to 175 (EQARQDEIARERKRRVESEKVW) the composition is skewed to basic and acidic residues. Positions 192-209 (KTKKNNLKKKNKKPRVLG) are enriched in basic residues.

The polypeptide is J domain-containing protein spf31 (spf31) (Schizosaccharomyces pombe (strain 972 / ATCC 24843) (Fission yeast)).